Here is a 645-residue protein sequence, read N- to C-terminus: TBC1 domain family member 17 (645 aa).

The interval 57–85 (PTQILFKKDPSRGEPSTSEEEPTFDPGYE) is disordered. The interval 217–309 (DPYSTTFSSF…PELKNRIFSG (93 aa)) is required for interaction with OPTN. One can recognise a Rab-GAP TBC domain in the interval 310 to 520 (GLSPGLRREA…RLWEVLWTGL (211 aa)). Residues 596–645 (QPEEPSSPSPPVSPMPLSPTRAPLPPPLPEEVIPQPDSSLEILPEDEDGA) are disordered. Residues 600-624 (PSSPSPPVSPMPLSPTRAPLPPPLP) show a composition bias toward pro residues. Residues Ser-602, Ser-604, and Ser-608 each carry the phosphoserine modification. Residue Thr-615 is modified to Phosphothreonine.

As to quaternary structure, interacts with OPTN; this interaction mediates TBC1D17 transient association with Rab8.

Its subcellular location is the cytoplasmic vesicle. It is found in the autophagosome. The protein resides in the cytoplasm. The protein localises to the recycling endosome. Probable GTPase-activating protein that inhibits RAB8A/B function. Reduces Rab8 recruitment to tubules emanating from the endocytic recycling compartment (ERC) and inhibits Rab8-mediated endocytic trafficking, such as that of transferrin receptor (TfR). Involved in regulation of autophagy. This is TBC1 domain family member 17 (Tbc1d17) from Mus musculus (Mouse).